The sequence spans 456 residues: Phosphomethylpyrimidine synthase (456 aa).

Substrate-binding positions include Asn80, Met109, Tyr139, His175, Ser195–Gly197, Asp236–Arg239, and Glu275. A Zn(2+)-binding site is contributed by His279. A substrate-binding site is contributed by Tyr302. His343 contacts Zn(2+). Positions 423, 426, and 431 each coordinate [4Fe-4S] cluster.

Belongs to the ThiC family. [4Fe-4S] cluster serves as cofactor.

The enzyme catalyses 5-amino-1-(5-phospho-beta-D-ribosyl)imidazole + S-adenosyl-L-methionine = 4-amino-2-methyl-5-(phosphooxymethyl)pyrimidine + CO + 5'-deoxyadenosine + formate + L-methionine + 3 H(+). Its pathway is cofactor biosynthesis; thiamine diphosphate biosynthesis. Functionally, catalyzes the synthesis of the hydroxymethylpyrimidine phosphate (HMP-P) moiety of thiamine from aminoimidazole ribotide (AIR) in a radical S-adenosyl-L-methionine (SAM)-dependent reaction. In Prochlorococcus marinus (strain MIT 9215), this protein is Phosphomethylpyrimidine synthase.